The following is a 197-amino-acid chain: Nucleoid occlusion factor SlmA (197 aa).

The region spanning 6 to 66 (NDRRTQILQA…GLIEFIEESL (61 aa)) is the HTH tetR-type domain. The segment at residues 29 to 48 (TTAALAKQVGVSEAALYRHF) is a DNA-binding region (H-T-H motif).

The protein belongs to the nucleoid occlusion factor SlmA family. In terms of assembly, homodimer. Interacts with FtsZ.

Its subcellular location is the cytoplasm. The protein localises to the nucleoid. Required for nucleoid occlusion (NO) phenomenon, which prevents Z-ring formation and cell division over the nucleoid. Acts as a DNA-associated cell division inhibitor that binds simultaneously chromosomal DNA and FtsZ, and disrupts the assembly of FtsZ polymers. SlmA-DNA-binding sequences (SBS) are dispersed on non-Ter regions of the chromosome, preventing FtsZ polymerization at these regions. The protein is Nucleoid occlusion factor SlmA of Marinomonas sp. (strain MWYL1).